We begin with the raw amino-acid sequence, 337 residues long: MSKSLRVGVVGAGAMGADHIDRINNRTSGAHISAIIEPDAARAAAAAENAPGAQAFTRIEDAIAADAVDAVLIAVPGQFHEPVLVPALEAGLPILCEKPLTPDSESSLRIVELEQKLDKPHIQVGFMRRFDPEYNNLRKLVESGEAGELLMLRGLHRNPSVGENYTQSMLITDSVVHEFDVIPWLAGSRVVSVEVKYPKTSSLAHSGLKEPILVIMELENGVLVDVEMNVNIQFGYQVATEAVFEKGLARIGQPSGMQRWRDGEFLINEHTDFTTRFATAYDRQIQSWVDAVHEGTLVAGPNAWDGYLVALSCEAGVKAFDGGVIPVDAAPRPDFYA.

Belongs to the Gfo/Idh/MocA family. As to quaternary structure, homotetramer.

It carries out the reaction myo-inositol + NAD(+) = scyllo-inosose + NADH + H(+). In terms of biological role, involved in the oxidation of myo-inositol (MI) to 2-keto-myo-inositol (2KMI or 2-inosose). This is Inositol 2-dehydrogenase from Corynebacterium glutamicum (strain R).